We begin with the raw amino-acid sequence, 59 residues long: MEEVIVTQDRSSIGIIPMHKKTLIALGLKKKGQSKKHKMTPQLKGMLRQVGYLLKVEKV.

The protein belongs to the universal ribosomal protein uL30 family. In terms of assembly, part of the 50S ribosomal subunit.

This Leptospira biflexa serovar Patoc (strain Patoc 1 / ATCC 23582 / Paris) protein is Large ribosomal subunit protein uL30.